A 307-amino-acid polypeptide reads, in one-letter code: Barttin (307 aa).

The Cytoplasmic segment spans residues 1–5 (MADEK). The tract at residues 1–72 (MADEKTFRIG…VPADSDFQGI (72 aa)) is regulates channel membrane trafficking and anion conductance. The helical transmembrane segment at 6-26 (TFRIGFIVLGLFLLSLGTFLM) threads the bilayer. Over 27–32 (SHDRPQ) the chain is Extracellular. The chain crosses the membrane as a helical span at residues 33 to 53 (VYGTFYAMGSVMVIGGVIWSM). 2 S-palmitoyl cysteine lipidation sites follow: Cys-54 and Cys-56. Residues 54-307 (CQCYPKITFV…ELGFEPDIQG (254 aa)) lie on the Cytoplasmic side of the membrane. Phosphoserine occurs at positions 79 and 107. Disordered regions lie at residues 135-154 (TGAS…WMEA) and 161-224 (GSDE…RGPL). Residues 161-171 (GSDENEGEKSH) are compositionally biased toward basic and acidic residues. Ser-162 is subject to Phosphoserine. Residues 172 to 183 (SQSSPSVGPQGS) show a composition bias toward low complexity. Positions 198 to 207 (SEGSSLQPSP) are enriched in polar residues. 2 positions are modified to phosphoserine: Ser-228 and Ser-289. A disordered region spans residues 255 to 307 (RKQQWSLRMKGETVQARAEEPEQEEEDLYYGLPDSPGNPLPDKELGFEPDIQG).

Interacts with CLCNK channels. Forms probably heteromers with CLCNKA in the thin ascending limb of Henle and with CLCNKB in the thick ascending limb and more distal segments. In terms of processing, palmitoylation is necessary for activation of plasma membrane-inserted CLC-K/barttin channels. Expression is evident in inner and outer stripes of the outer medulla of the kidney, most probably representing thin limbs of Henle's loop together with some collecting duct coursing through the outer stripe. In situ hybridization in fetal kidney at 18.5 dpc revealed a clear continuity between hybridization signals from the thin limb of Henle's loop and the distal convoluted tubule, suggesting that part of the expression pattern may result from expression in the thick ascending limb of Henle's loop. In addition, strong signals are present in a subset of cortical tubules, representing distal convoluted tubules or cortical collecting duct. Strong expression is also observed in the inner medulla of the kidney. This expression does not extend all the way to the tip of the papilla. Thus this signal most probably represents cells of the thin ascending limbs. In the inner ear, strong and exclusive expression is detected in marginal cells of the stria vascularis. In addition to cochlear signal, expression is observed in dark cells localized at the base of the crista ampullaris of the vestibular organ.

The protein localises to the basolateral cell membrane. In terms of biological role, regulatory subunit of anion-selective CLCNKA:BSND and CLCNKB:BSND heteromeric channels involved in basolateral chloride conductance along the nephron to achieve urine concentration and maintain systemic acid-base homeostasis, and in the stria vascularis of the inner ear to establish the endocochlear potential necessary for normal hearing. Most likely acts as a chaperone that allosterically regulates proper sorting of CLCNKA:BSND and CLCNKB:BSND channels at the basolateral plasma membrane domain and functional switch to ion conducting state. Mediates constitutive opening of channel common gates. This is Barttin from Mus musculus (Mouse).